A 250-amino-acid chain; its full sequence is 5'-nucleotidase SurE (250 aa).

Positions 8, 9, 39, and 91 each coordinate a divalent metal cation.

This sequence belongs to the SurE nucleotidase family. A divalent metal cation is required as a cofactor.

Its subcellular location is the cytoplasm. The enzyme catalyses a ribonucleoside 5'-phosphate + H2O = a ribonucleoside + phosphate. Functionally, nucleotidase that shows phosphatase activity on nucleoside 5'-monophosphates. The chain is 5'-nucleotidase SurE from Syntrophotalea carbinolica (strain DSM 2380 / NBRC 103641 / GraBd1) (Pelobacter carbinolicus).